The primary structure comprises 592 residues: Leucine-rich repeat and immunoglobulin-like domain-containing nogo receptor-interacting protein 3 (592 aa).

Positions 1 to 24 are cleaved as a signal peptide; that stretch reads MTCWLCVLSLPLLLLPAAPPPAGG. The LRRNT domain maps to 25–54; the sequence is CPARCECTVQTRAVACTRRRLTAVPDGIPA. Over 25-531 the chain is Extracellular; that stretch reads CPARCECTVQ…LDLTTILVST (507 aa). LRR repeat units lie at residues 55 to 76, 79 to 100, 103 to 124, 127 to 148, 151 to 172, 175 to 196, 207 to 228, 247 to 268, 271 to 292, 295 to 316, and 319 to 340; these read ETRL…DLAA, ALEE…AFAN, RLRV…VFTR, NLTL…TFQD, SLRR…AFAG, ALEE…SLGH, HLAI…LHLE, NLTS…ALRH, HLTC…SFRD, RLRE…AFLG, and QIRL…TFHS. Residue N127 is glycosylated (N-linked (GlcNAc...) asparagine). N185 carries an N-linked (GlcNAc...) asparagine glycan. 3 N-linked (GlcNAc...) asparagine glycosylation sites follow: N247, N257, and N276. Residue N324 is glycosylated (N-linked (GlcNAc...) asparagine). An LRRCT domain is found at 352 to 406; the sequence is NPLACDCRLLWIVQRRKTLNFDGRLPACATPAEVRGDALRNLPDSVLFEYFVCRK. The Ig-like C2-type domain occupies 407–496; the sequence is PKIRERRLQR…GNDTYFATLT (90 aa). A disulfide bond links C429 and C480. 2 N-linked (GlcNAc...) asparagine glycosylation sites follow: N488 and N512. The helical transmembrane segment at 532 to 552 threads the bilayer; sequence AMGCITFLGVVLFCFVLLFVW. Topologically, residues 553 to 592 are cytoplasmic; that stretch reads SRGRGQHKNNFSVEYSFRKVDGPAAAAGQGGARKFNMKMI.

The protein resides in the membrane. In Homo sapiens (Human), this protein is Leucine-rich repeat and immunoglobulin-like domain-containing nogo receptor-interacting protein 3 (LINGO3).